Here is a 401-residue protein sequence, read N- to C-terminus: All trans-polyprenyl-diphosphate synthase PDSS2 (401 aa).

Belongs to the FPP/GGPP synthase family. As to quaternary structure, heterotetramer composed of 2 PDSS1/DPS1 and 2 PDSS2/DLP1 subunits.

The protein resides in the mitochondrion. The enzyme catalyses 7 isopentenyl diphosphate + (2E,6E)-farnesyl diphosphate = all-trans-decaprenyl diphosphate + 7 diphosphate. It catalyses the reaction 6 isopentenyl diphosphate + (2E,6E)-farnesyl diphosphate = all-trans-nonaprenyl diphosphate + 6 diphosphate. The protein operates within cofactor biosynthesis; ubiquinone biosynthesis. Functionally, heterotetrameric enzyme that catalyzes the condensation of farnesyl diphosphate (FPP), which acts as a primer, and isopentenyl diphosphate (IPP) to produce prenyl diphosphates of varying chain lengths and participates in the determination of the side chain of ubiquinone. Supplies nona and decaprenyl diphosphate, the precursors for the side chain of the isoprenoid quinones ubiquinone-9 (Q9) and ubiquinone-10 (Q10) respectively. The enzyme adds isopentenyl diphosphate molecules sequentially to farnesyl diphosphate with trans stereochemistry. May play a role during cerebellar development. May regulate mitochondrial respiratory chain function. In Mus musculus (Mouse), this protein is All trans-polyprenyl-diphosphate synthase PDSS2.